The following is an 872-amino-acid chain: Alanine--tRNA ligase (872 aa).

Residues His567, His571, Cys669, and His673 each contribute to the Zn(2+) site.

The protein belongs to the class-II aminoacyl-tRNA synthetase family. The cofactor is Zn(2+).

The protein localises to the cytoplasm. It carries out the reaction tRNA(Ala) + L-alanine + ATP = L-alanyl-tRNA(Ala) + AMP + diphosphate. Catalyzes the attachment of alanine to tRNA(Ala) in a two-step reaction: alanine is first activated by ATP to form Ala-AMP and then transferred to the acceptor end of tRNA(Ala). Also edits incorrectly charged Ser-tRNA(Ala) and Gly-tRNA(Ala) via its editing domain. The protein is Alanine--tRNA ligase of Streptococcus thermophilus (strain CNRZ 1066).